A 305-amino-acid polypeptide reads, in one-letter code: UDP-3-O-acyl-N-acetylglucosamine deacetylase (305 aa).

Positions 78, 237, and 241 each coordinate Zn(2+). His264 serves as the catalytic Proton donor.

This sequence belongs to the LpxC family. The cofactor is Zn(2+).

The enzyme catalyses a UDP-3-O-[(3R)-3-hydroxyacyl]-N-acetyl-alpha-D-glucosamine + H2O = a UDP-3-O-[(3R)-3-hydroxyacyl]-alpha-D-glucosamine + acetate. Its pathway is glycolipid biosynthesis; lipid IV(A) biosynthesis; lipid IV(A) from (3R)-3-hydroxytetradecanoyl-[acyl-carrier-protein] and UDP-N-acetyl-alpha-D-glucosamine: step 2/6. Its function is as follows. Catalyzes the hydrolysis of UDP-3-O-myristoyl-N-acetylglucosamine to form UDP-3-O-myristoylglucosamine and acetate, the committed step in lipid A biosynthesis. This Burkholderia thailandensis (strain ATCC 700388 / DSM 13276 / CCUG 48851 / CIP 106301 / E264) protein is UDP-3-O-acyl-N-acetylglucosamine deacetylase.